A 921-amino-acid chain; its full sequence is Isoleucine--tRNA ligase (921 aa).

Positions 57–67 match the 'HIGH' region motif; it reads PYANGDIHMGH. Glu552 serves as a coordination point for L-isoleucyl-5'-AMP. The 'KMSKS' region motif lies at 593-597; sequence KMSKS. Lys596 lines the ATP pocket. The Zn(2+) site is built by Cys888, Cys891, Cys908, and Cys911.

The protein belongs to the class-I aminoacyl-tRNA synthetase family. IleS type 1 subfamily. As to quaternary structure, monomer. Zn(2+) is required as a cofactor.

It is found in the cytoplasm. The enzyme catalyses tRNA(Ile) + L-isoleucine + ATP = L-isoleucyl-tRNA(Ile) + AMP + diphosphate. Functionally, catalyzes the attachment of isoleucine to tRNA(Ile). As IleRS can inadvertently accommodate and process structurally similar amino acids such as valine, to avoid such errors it has two additional distinct tRNA(Ile)-dependent editing activities. One activity is designated as 'pretransfer' editing and involves the hydrolysis of activated Val-AMP. The other activity is designated 'posttransfer' editing and involves deacylation of mischarged Val-tRNA(Ile). The protein is Isoleucine--tRNA ligase of Bacillus mycoides (strain KBAB4) (Bacillus weihenstephanensis).